A 437-amino-acid chain; its full sequence is ATP-dependent protease ATPase subunit HslU (437 aa).

ATP contacts are provided by residues Val-18, 60-65 (GVGKTE), Asp-249, Glu-315, and Arg-387.

It belongs to the ClpX chaperone family. HslU subfamily. A double ring-shaped homohexamer of HslV is capped on each side by a ring-shaped HslU homohexamer. The assembly of the HslU/HslV complex is dependent on binding of ATP.

It is found in the cytoplasm. ATPase subunit of a proteasome-like degradation complex; this subunit has chaperone activity. The binding of ATP and its subsequent hydrolysis by HslU are essential for unfolding of protein substrates subsequently hydrolyzed by HslV. HslU recognizes the N-terminal part of its protein substrates and unfolds these before they are guided to HslV for hydrolysis. This is ATP-dependent protease ATPase subunit HslU from Rhodospirillum centenum (strain ATCC 51521 / SW).